A 279-amino-acid chain; its full sequence is Pantothenate synthetase (279 aa).

Residue 26–33 (MGNLHEGH) participates in ATP binding. Catalysis depends on H33, which acts as the Proton donor. Residue Q57 coordinates (R)-pantoate. A beta-alanine-binding site is contributed by Q57. 144–147 (GKKD) contributes to the ATP binding site. Q150 contributes to the (R)-pantoate binding site. Residues V173 and 181–184 (LSSR) contribute to the ATP site.

This sequence belongs to the pantothenate synthetase family. In terms of assembly, homodimer.

It localises to the cytoplasm. It catalyses the reaction (R)-pantoate + beta-alanine + ATP = (R)-pantothenate + AMP + diphosphate + H(+). It participates in cofactor biosynthesis; (R)-pantothenate biosynthesis; (R)-pantothenate from (R)-pantoate and beta-alanine: step 1/1. Its function is as follows. Catalyzes the condensation of pantoate with beta-alanine in an ATP-dependent reaction via a pantoyl-adenylate intermediate. The chain is Pantothenate synthetase from Burkholderia thailandensis (strain ATCC 700388 / DSM 13276 / CCUG 48851 / CIP 106301 / E264).